A 1303-amino-acid chain; its full sequence is Zinc finger CCCH domain-containing protein 4 (1303 aa).

Positions 1-33 (MEAAPGTPPPPPSESPPPPSPPPPSTPSPPPCS) are enriched in pro residues. The tract at residues 1–388 (MEAAPGTPPP…RDHDKPHQQS (388 aa)) is disordered. The span at 53-73 (DREDGELEEGELEDDGAEETQ) shows a compositional bias: acidic residues. Phosphothreonine occurs at positions 72 and 75. Serine 76, serine 92, and serine 94 each carry phosphoserine. The segment covering 80 to 99 (ERSRKEKGEKHHSDSDEEKS) has biased composition (basic and acidic residues). Residues 95-128 (DEEKSHRRLKRKRKKEREKEKRRSKKRRKSKHKR) adopt a coiled-coil conformation. The segment covering 100-130 (HRRLKRKRKKEREKEKRRSKKRRKSKHKRHA) has biased composition (basic residues). Residues 135 to 144 (DFSDFSDDSD) are compositionally biased toward acidic residues. A Phosphotyrosine modification is found at tyrosine 155. A compositionally biased stretch (acidic residues) spans 194-218 (EDYENEQYGEYEGDEEEDMGKEDYD). Residues 219–235 (DFTKELNQYRRAKEGSS) show a composition bias toward basic and acidic residues. Residues 238–251 (RGSRGRGRGYRGRG) show a composition bias toward basic residues. Residues 252 to 274 (SRGGSRGRGMGRGSRGRGRGSMG) show a composition bias toward gly residues. Over residues 278 to 304 (PEDEEDFYEEEMDYGESEEPMGDDDYD) the composition is skewed to acidic residues. The span at 305–321 (EYSKELNQYRRSKDSRG) shows a compositional bias: basic and acidic residues. Positions 323–346 (GLSRGRGRGSRGRGKGMGRGRGRG) are enriched in basic residues. A compositionally biased stretch (acidic residues) spans 358-369 (NDDEDFYDEDMG). Basic and acidic residues predominate over residues 377-388 (RSRDHDKPHQQS). C3H1-type zinc fingers lie at residues 390–417 (KKGK…HDIE), 419–446 (PKKR…HGDF), and 447–470 (PCKL…HDPL). Positions 486–496 (AEAGAEDEKEV) are enriched in acidic residues. Positions 486 to 571 (AEAGAEDEKE…HEPLSPQQLQ (86 aa)) are disordered. Pro residues-rich tracts occupy residues 507–529 (LPKP…PQAP) and 539–558 (GGPP…PQMP). Residue arginine 601 is modified to Asymmetric dimethylarginine. The span at 605-624 (PGGPPGPMGPGPNMGPPGPM) shows a compositional bias: pro residues. Disordered regions lie at residues 605-685 (PGGP…SGMM), 710-955 (GLLG…PRSQ), and 996-1288 (PPVP…ASLK). The segment covering 630–650 (PDMHPDMHPDMHPDMHADMHA) has biased composition (basic and acidic residues). A compositionally biased stretch (pro residues) spans 659–673 (NPGPPMGPGGPPMMP). 2 stretches are compositionally biased toward basic and acidic residues: residues 717-739 (DYGH…HPLE) and 782-795 (ERAR…KQDR). A coiled-coil region spans residues 767 to 800 (RALYLRIQQKQQEEEERARRLAESSKQDRENEEG). Residues serine 807 and serine 808 each carry the phosphoserine modification. Residues 815–843 (SSVTSILKTLRQQTSSRPPASVGELSSSG) show a composition bias toward polar residues. Residues 860 to 875 (ADPRLSRDPRLTRHVE) are compositionally biased toward basic and acidic residues. Residues serine 904, serine 907, and serine 908 each carry the phosphoserine modification. Over residues 904-918 (SLHSSPVGPSSSKGS) the composition is skewed to low complexity. 2 stretches are compositionally biased toward polar residues: residues 1028-1038 (GASTDSSTQGA) and 1053-1062 (VNATGSSAAP). Residues 1067–1084 (KPSDPRVRKAPTDPRLQK) show a composition bias toward basic and acidic residues. The segment covering 1097-1110 (PGPAEAPSPTASPS) has biased composition (low complexity). Phosphoserine is present on serine 1104. At threonine 1106 the chain carries Phosphothreonine. A phosphoserine mark is found at serine 1108, serine 1110, and serine 1114. Threonine 1118 carries the post-translational modification Phosphothreonine. Residues 1129–1139 (GGLGQGGGGGQ) are compositionally biased toward gly residues. The span at 1224–1234 (KAAAAPAATTA) shows a compositional bias: low complexity. A compositionally biased stretch (pro residues) spans 1235–1245 (TPPPEGAPPQP). A compositionally biased stretch (polar residues) spans 1259-1268 (VKQTPKTGSG). Phosphoserine occurs at positions 1269 and 1275.

Belongs to the suppressor of sable family. In terms of assembly, interacts with WDR82.

Its subcellular location is the chromosome. In terms of biological role, RNA-binding protein that suppresses transcription of long non-coding RNAs (lncRNAs). LncRNAs are defined as transcripts more than 200 nucleotides that are not translated into protein. Together with WDR82, part of a transcription termination checkpoint that promotes transcription termination of lncRNAs and their subsequent degradation by the exosome. The transcription termination checkpoint is activated by the inefficiently spliced first exon of lncRNAs. The chain is Zinc finger CCCH domain-containing protein 4 from Homo sapiens (Human).